We begin with the raw amino-acid sequence, 428 residues long: Serine--tRNA ligase (428 aa).

Residue 231 to 233 (TAE) coordinates L-serine. 262-264 (RSE) is a binding site for ATP. L-serine is bound at residue glutamate 285. Residue 349-352 (EISS) coordinates ATP. An L-serine-binding site is contributed by serine 385.

It belongs to the class-II aminoacyl-tRNA synthetase family. Type-1 seryl-tRNA synthetase subfamily. In terms of assembly, homodimer. The tRNA molecule binds across the dimer.

It localises to the cytoplasm. The enzyme catalyses tRNA(Ser) + L-serine + ATP = L-seryl-tRNA(Ser) + AMP + diphosphate + H(+). The catalysed reaction is tRNA(Sec) + L-serine + ATP = L-seryl-tRNA(Sec) + AMP + diphosphate + H(+). Its pathway is aminoacyl-tRNA biosynthesis; selenocysteinyl-tRNA(Sec) biosynthesis; L-seryl-tRNA(Sec) from L-serine and tRNA(Sec): step 1/1. In terms of biological role, catalyzes the attachment of serine to tRNA(Ser). Is also able to aminoacylate tRNA(Sec) with serine, to form the misacylated tRNA L-seryl-tRNA(Sec), which will be further converted into selenocysteinyl-tRNA(Sec). The polypeptide is Serine--tRNA ligase (Staphylococcus aureus (strain Mu3 / ATCC 700698)).